Here is a 433-residue protein sequence, read N- to C-terminus: Histidine--tRNA ligase (433 aa).

The protein belongs to the class-II aminoacyl-tRNA synthetase family. As to quaternary structure, homodimer.

It is found in the cytoplasm. It carries out the reaction tRNA(His) + L-histidine + ATP = L-histidyl-tRNA(His) + AMP + diphosphate + H(+). In Pseudothermotoga lettingae (strain ATCC BAA-301 / DSM 14385 / NBRC 107922 / TMO) (Thermotoga lettingae), this protein is Histidine--tRNA ligase.